A 205-amino-acid polypeptide reads, in one-letter code: Probable GTP-binding protein EngB (205 aa).

Residues 27–201 (QGMEVAFAGR…QNKLNAWFSG (175 aa)) enclose the EngB-type G domain. GTP contacts are provided by residues 35–42 (GRSNAGKS), 62–66 (GRTQL), 80–83 (DLPG), 147–150 (TKVD), and 180–182 (FSS). Positions 42 and 64 each coordinate Mg(2+).

The protein belongs to the TRAFAC class TrmE-Era-EngA-EngB-Septin-like GTPase superfamily. EngB GTPase family. The cofactor is Mg(2+).

Its function is as follows. Necessary for normal cell division and for the maintenance of normal septation. This chain is Probable GTP-binding protein EngB, found in Hamiltonella defensa subsp. Acyrthosiphon pisum (strain 5AT).